The primary structure comprises 100 residues: MRTLTILTAVLLVALQAKAEPLQAEDEPLQAKAYEADAQEQRGANDQDFAVSFAEDASSSLRALGSTRAFTCHCRRSCYSTEYSYGTCTVMGINHRFCCL.

The signal sequence occupies residues 1–19 (MRTLTILTAVLLVALQAKA). Positions 20-68 (EPLQAEDEPLQAKAYEADAQEQRGANDQDFAVSFAEDASSSLRALGSTR) are excised as a propeptide. Cystine bridges form between Cys-72–Cys-99, Cys-74–Cys-88, and Cys-78–Cys-98.

The protein belongs to the alpha-defensin family. Homodimer. Self-assembles into higher-order oligomers termed nanonets, fibril-like structures that entrap microbes. Self-assembly into nanonets seems to protect against proteolytic digestion in duodenal fluid. Interacts with Y.enterocolitica invasin and S.typhimurium fliC/flagellim; the interaction creates an anchoring site for progressive DEFA6 self-assembly into nanonets. In terms of processing, proteolytically cleaved by trypsin at Arg-68; the propeptide is stored in the tissue of the small intestine and the mature peptide is found in the luminal fluid; cleavage may occur during or after release into the lumen. The N-terminal propeptide region suppresses self-assembly and renders DEFA6 propeptide unable to agglutinate bacteria and protect human epithelial cells from bacterial invasion. Under reducing conditions, naturally present in the gut owing to the low redox potential or enzymatically generated by the thioredoxin system, the disulfide bridges are opened leading to a conformational change of DEF6, thereby changing its antimicrobial spectrum. The reduced form exhibits inhibitory activity against anaerobic bacteria, in contrast to the minimal antimicrobial activity of the disulfide-linked oxidized form. The formation of higher-order nanonets and bacterial entrapment is independent of the redox state.

It localises to the secreted. It is found in the cytoplasmic vesicle. Its subcellular location is the secretory vesicle. Functionally, host-defense peptide that contributes to intestinal innate immunity and mediates homeostasis at mucosal surfaces by forming higher-order oligomers that capture bacteria and prevent microbial invasion of the epithelium. After binding to bacterial surface proteins, undergoes ordered self-assembly to form fibril-like nanonets that surround and entangle bacteria and thereby prevent bacterial invasion across the epithelial barrier. Entangles and agglutinates Gram-negative bacteria, such as E.coli, S.typhimurium and Y.enterocolitica, and Gram-positive bacteria such as L.monocytogenes, thereby protecting the intestine against invasion by enteric bacterial pathogens. Blocks adhesion of C.albicans to intestinal epithelial cells and thereby suppresses fungal invasion of epithelial cells and biofilm formation. Under reducing conditions and in an acidic environment similar to the intestinal milieu, exhibits inhibitory activity against anaerobic bacteria such as B.adolescentis, L.acidophilus, and B.breve, as well as B.longum and S.thermophilus, possibly by leading to alterations in bacterial cell envelope structures. The disulfide-linked oxidized form exhibits negligible antimicrobial activity against Gram-negative and Gram-positive bacteria, as compared to the enteric defensin DEFA5. The sequence is that of Defensin-6 (DEFA6) from Pan troglodytes (Chimpanzee).